The chain runs to 668 residues: Neurexin-3-beta (668 aa).

The N-terminal stretch at 1 to 35 is a signal peptide; the sequence is MHLRTNPSICPGRRPAWTLWMCSLFWGCIVSSVWS. The Extracellular segment spans residues 36-593; the sequence is SSNVASSASS…EVVRESSSTT (558 aa). The Laminin G-like domain maps to 84-284; the sequence is ATYIFGKSGG…NPNIKINGSV (201 aa). The disordered stretch occupies residues 510–529; sequence TASSSTGMVPKLPAGKMNNR. The helical transmembrane segment at 594 to 614 threads the bilayer; the sequence is GMVVGIVAAAALCILILLYAM. Residues 615–668 lie on the Cytoplasmic side of the membrane; that stretch reads YKYRNRDEGSYQVDETRNYISNSAQSNGTLMKEKQQSSKSGHKKQKNKDKEYYV. The segment at 636-668 is disordered; sequence NSAQSNGTLMKEKQQSSKSGHKKQKNKDKEYYV.

It belongs to the neurexin family. Processed by alpha-secretase leading to the formation of an extracellular soluble protein as well as a C-terminal membrane-embedded fragment (CTF). Proteolysis of these CTFs by gamma-secretase releases intracellular domains (ICDs) and extracellular peptides. Brain and arteries (at protein level).

It localises to the membrane. Functionally, neuronal cell surface protein that may be involved in cell recognition and cell adhesion. Plays a role in angiogenesis. This is Neurexin-3-beta (NRXN3) from Gallus gallus (Chicken).